The primary structure comprises 322 residues: Pilin gene-inverting protein (322 aa).

May be the site-specific invertase required for pilin gene inversion. Moraxella can express either a Q or I pilin; the inversion of 2 kb of DNA determines which pilin is expressed. In Moraxella bovis, this protein is Pilin gene-inverting protein (piv).